A 386-amino-acid polypeptide reads, in one-letter code: Epoxyqueuosine reductase (386 aa).

Cob(II)alamin contacts are provided by residues Arg57, Cys97, Asp134, 139–141, Ser152, Asn155, Ile158, and Leu169; that span reads SDR. The active-site Proton donor is the Asp134. Positions 178–208 constitute a 4Fe-4S ferredoxin-type domain; it reads FEPDVPIEDMCGSCTKCLDACPTGALVNPGQ. [4Fe-4S] cluster is bound by residues Cys188, Cys191, Cys194, Cys198, and Cys214. Cob(II)alamin is bound at residue Ser216. TRNA-binding residues include Gln220 and Lys222. [4Fe-4S] cluster is bound by residues Cys240, Cys243, and Cys247. A cob(II)alamin-binding site is contributed by 240–241; the sequence is CD. Residues Asn280, Arg281, Arg295, Lys297, and Lys298 each contribute to the tRNA site. The HEAT-like PBS-type repeat unit spans residues 333-357; it reads RGTAAWAIGKIGDPAYAEELEKALE.

Belongs to the QueG family. In terms of assembly, monomer. It depends on cob(II)alamin as a cofactor. [4Fe-4S] cluster is required as a cofactor.

The protein localises to the cytoplasm. It carries out the reaction epoxyqueuosine(34) in tRNA + AH2 = queuosine(34) in tRNA + A + H2O. Its pathway is tRNA modification; tRNA-queuosine biosynthesis. Catalyzes the conversion of epoxyqueuosine (oQ) to queuosine (Q), which is a hypermodified base found in the wobble positions of tRNA(Asp), tRNA(Asn), tRNA(His) and tRNA(Tyr). The polypeptide is Epoxyqueuosine reductase (Bacillus subtilis (strain 168)).